Reading from the N-terminus, the 72-residue chain is Toxin Acra II-3 (72 aa).

Positions 4–67 (PGNYPLDTRG…VWNAAKNYCK (64 aa)) constitute an LCN-type CS-alpha/beta domain. Cystine bridges form between C18-C41, C27-C46, and C31-C48.

The protein belongs to the long (3 C-C) scorpion toxin superfamily. Sodium channel inhibitor family. Beta subfamily. In terms of tissue distribution, expressed by the venom gland.

The protein resides in the secreted. Its function is as follows. Binds to sodium channels (Nav) and affects the channel activation process. The chain is Toxin Acra II-3 from Androctonus crassicauda (Arabian fat-tailed scorpion).